The sequence spans 44 residues: Conotoxin Rg11a (44 aa).

Intrachain disulfides connect C1–C15, C8–C22, C14–C30, and C21–C36.

As to expression, expressed by the venom duct.

It localises to the secreted. Its function is as follows. Neurotoxin. Elicits hypersensibility when injected intracranially in mice. May act via potassium channel currents. In Conus regius (Crown cone), this protein is Conotoxin Rg11a.